Consider the following 776-residue polypeptide: General transcription and DNA repair factor IIH helicase subunit XPD (776 aa).

Residues 7-277 (DLLVYFPYSY…KKVDEKRLKD (271 aa)) enclose the Helicase ATP-binding domain. 42–49 (MPSGTGKT) provides a ligand contact to ATP. Residues Cys-115, Cys-133, Cys-150, and Cys-184 each coordinate [4Fe-4S] cluster. A DEAH box motif is present at residues 228-231 (DEAH). The tract at residues 736 to 776 (HVEKQSTSKPPQQQNSAINSTITTSTTTTTTTSTISETHLT) is disordered. Residues 742–754 (TSKPPQQQNSAIN) show a composition bias toward polar residues. Low complexity predominate over residues 755–776 (STITTSTTTTTTTSTISETHLT).

The protein belongs to the helicase family. RAD3/XPD subfamily. In terms of assembly, component of the 7-subunit TFIIH core complex composed of XPB/repB, XPD/repD, gtf2h1, gtf2h2, gtf2h3, gtf2h4 and gtf2h5, which is active in NER. The core complex associates with the 3-subunit CDK-activating kinase (CAK) module composed of cycH/cyclin H, cdk7 and mnat1 to form the 10-subunit holoenzyme (holo-TFIIH) active in transcription. Requires Mg(2+) as cofactor. It depends on [4Fe-4S] cluster as a cofactor.

The protein resides in the nucleus. It catalyses the reaction Couples ATP hydrolysis with the unwinding of duplex DNA at the replication fork by translocating in the 5'-3' direction. This creates two antiparallel DNA single strands (ssDNA). The leading ssDNA polymer is the template for DNA polymerase III holoenzyme which synthesizes a continuous strand.. The catalysed reaction is ATP + H2O = ADP + phosphate + H(+). ATP-dependent 5'-3' DNA helicase, component of the general transcription and DNA repair factor IIH (TFIIH) core complex, which is involved in general and transcription-coupled nucleotide excision repair (NER) of damaged DNA and, when complexed to CDK-activating kinase (CAK), in transcription by RNA polymerase II. In NER, TFIIH acts by opening DNA around the lesion to allow the excision of the damaged oligonucleotide and its replacement by a new DNA fragment. The ATP-dependent helicase activity of XPD/repD is required for DNA opening. In transcription, TFIIH has an essential role in transcription initiation. When the pre-initiation complex (PIC) has been established, TFIIH is required for promoter opening and promoter escape. Phosphorylation of the C-terminal tail (CTD) of the largest subunit of RNA polymerase II by the kinase module CAK controls the initiation of transcription. XPD/repD acts by forming a bridge between CAK and the core-TFIIH complex. The sequence is that of General transcription and DNA repair factor IIH helicase subunit XPD from Dictyostelium discoideum (Social amoeba).